The primary structure comprises 446 residues: Argininosuccinate synthase (446 aa).

ATP is bound by residues 17-25 (AFSGGLDTS) and Ala43. Tyr99 contacts L-citrulline. 2 residues coordinate ATP: Gly129 and Thr131. Positions 131, 135, and 136 each coordinate L-aspartate. Asn135 lines the L-citrulline pocket. Asp136 contributes to the ATP binding site. Residues Arg139 and Ser192 each contribute to the L-citrulline site. Position 194 (Asp194) interacts with ATP. Residues Thr201, Glu203, and Glu280 each contribute to the L-citrulline site.

The protein belongs to the argininosuccinate synthase family. Type 2 subfamily. In terms of assembly, homotetramer.

Its subcellular location is the cytoplasm. The enzyme catalyses L-citrulline + L-aspartate + ATP = 2-(N(omega)-L-arginino)succinate + AMP + diphosphate + H(+). Its pathway is amino-acid biosynthesis; L-arginine biosynthesis; L-arginine from L-ornithine and carbamoyl phosphate: step 2/3. The chain is Argininosuccinate synthase from Burkholderia thailandensis (strain ATCC 700388 / DSM 13276 / CCUG 48851 / CIP 106301 / E264).